A 429-amino-acid chain; its full sequence is Neuronal pentraxin-2 (429 aa).

The first 14 residues, 1 to 14 (MLALLTVGVALAVA), serve as a signal peptide directing secretion. N-linked (GlcNAc...) asparagine glycosylation is found at Asn-146 and Asn-187. Positions 221–422 (DAFKVSLPLR…GASKWPVETC (202 aa)) constitute a Pentraxin (PTX) domain. Cys-251 and Cys-311 are disulfide-bonded. Positions 275, 353, 354, 355, and 365 each coordinate Ca(2+). Residue Asn-391 is glycosylated (N-linked (GlcNAc...) asparagine).

As to quaternary structure, homooligomer or heterooligomer (probably pentamer) with neuronal pentraxin receptor (NPTXR). The cofactor is Ca(2+).

The protein resides in the secreted. Its function is as follows. Likely to play role in the modification of cellular properties that underlie long-term plasticity. Binds to agar matrix in a calcium-dependent manner. In Mus musculus (Mouse), this protein is Neuronal pentraxin-2 (Nptx2).